We begin with the raw amino-acid sequence, 302 residues long: Diacetylchitobiose uptake system permease protein NgcG (302 aa).

Transmembrane regions (helical) follow at residues 40–60 (LLILWSVIVIVPMLWVLMSSF), 99–119 (VIVVVSALILVMLLGAMCAYV), 131–151 (IYYVMLAGLTFPVFLAIVPLF), 166–186 (LILTYVAFALPFTMFFLYSFF), 221–241 (AAVAIFNFLGLWNQFLLPVAL), and 268–288 (GALFAAIVVTVVPVLLVYCVF). Residues 95–288 (FLNSVIVVVS…VPVLLVYCVF (194 aa)) enclose the ABC transmembrane type-1 domain.

Belongs to the binding-protein-dependent transport system permease family. In terms of assembly, the complex is composed of two ATP-binding proteins (MsiK), two transmembrane proteins (NgcF and NgcG) and a solute-binding protein (NgcE).

The protein resides in the cell membrane. In terms of biological role, part of the ABC transporter complex NgcEFG-MsiK involved in N,N'-diacetylchitobiose ((GlcNAc)2) uptake. Responsible for the translocation of the substrate across the membrane. The protein is Diacetylchitobiose uptake system permease protein NgcG of Streptomyces coelicolor (strain ATCC BAA-471 / A3(2) / M145).